We begin with the raw amino-acid sequence, 568 residues long: PTS system lactose-specific EIICB component (568 aa).

The PTS EIIC type-3 domain occupies 7-409 (LIEKGKPFFE…VVDTIIYYPF (403 aa)). 9 helical membrane passes run 30-50 (GFIA…IAYV), 62-82 (IETF…FFVG), 103-123 (INFL…AAEP), 128-148 (GFLT…AAFV), 183-203 (FTVS…TLGV), 222-242 (GYLG…VGIH), 283-303 (FIAT…FMWI), 339-359 (IFFV…KFFV), and 389-409 (VLSF…YYPF). The PTS EIIB type-3 domain maps to 466-568 (ETNVLVLCAG…ALAFVQQQFD (103 aa)). Cys473 functions as the Phosphocysteine intermediate; for EIIB activity in the catalytic mechanism. Cys473 bears the Phosphocysteine; by EIIA mark.

It localises to the cell membrane. The catalysed reaction is lactose(out) + N(pros)-phospho-L-histidyl-[protein] = lactose 6-phosphate(in) + L-histidyl-[protein]. Functionally, the phosphoenolpyruvate-dependent sugar phosphotransferase system (sugar PTS), a major carbohydrate active transport system, catalyzes the phosphorylation of incoming sugar substrates concomitantly with their translocation across the cell membrane. The enzyme II LacEF PTS system is involved in lactose transport. This Lactococcus lactis subsp. lactis (Streptococcus lactis) protein is PTS system lactose-specific EIICB component.